The sequence spans 421 residues: MNRGFSRKSHTFLPKIFFRKMSSSGAKDKPELQFPFLQDEDTVATLLECKTLFILRGLPGSGKSTLARVIVDKYRDGTKMVSADAYKITPGARGAFSEEYKRLDEDLAAYCRRRDIRILVLDDTNHERERLEQLFEMADQYQYQVVLVEPKTAWRLDCAQLKEKNQWQLSADDLKKLKPGLEKDFLPLYFGWFLTKKSSETLRKAGQVFLEELGNHKAFKKELRQFVPGDEPREKMDLVTYFGKRPPGVLHCTTKFCDYGKAPGAEEYAQQDVLKKSYSKAFTLTISALFVTPKTTGARVELSEQQLQLWPSDVDKLSPTDNLPRGSRAHITLGCAADVEAVQTGLDLLEILRQEKGGSRGEEVGELSRGKLYSLGNGRWMLTLAKNMEVRAIFTGYYGKGKPVPTQGSRKGGALQSCTII.

Residues S6 and S9 each carry the phosphoserine modification. Y110 bears the Phosphotyrosine mark. At S170 the chain carries Phosphoserine. H251 (proton acceptor) is an active-site residue. T253 contributes to the substrate binding site. Catalysis depends on H330, which acts as the Proton donor. T332 is a substrate binding site. S359 is modified (phosphoserine). A Cysteine methyl ester modification is found at C418. C418 carries S-farnesyl cysteine lipidation. A propeptide spans 419 to 421 (TII) (removed in mature form).

Belongs to the 2H phosphoesterase superfamily. CNPase family. Exists as monomers and homodimers.

The protein localises to the membrane. The protein resides in the melanosome. It catalyses the reaction a nucleoside 2',3'-cyclic phosphate + H2O = a nucleoside 2'-phosphate + H(+). In terms of biological role, catalyzes the formation of 2'-nucleotide products from 2',3'-cyclic substrates. May participate in RNA metabolism in the myelinating cell, CNP is the third most abundant protein in central nervous system myelin. The protein is 2',3'-cyclic-nucleotide 3'-phosphodiesterase of Homo sapiens (Human).